Reading from the N-terminus, the 321-residue chain is Nacrein-like protein (321 aa).

Positions 1–319 constitute an Alpha-carbonic anhydrase domain; the sequence is RGPKNWCKVH…NKNVIVYRNH (319 aa). The active-site Proton acceptor is H58.

Belongs to the alpha-carbonic anhydrase family. Component of the organic matrix of calcified shell layers like nacre and prisms.

Its subcellular location is the secreted. The polypeptide is Nacrein-like protein (Mytilus californianus (California mussel)).